Reading from the N-terminus, the 123-residue chain is Holo-[acyl-carrier-protein] synthase (123 aa).

Mg(2+) contacts are provided by aspartate 8 and glutamate 60.

The protein belongs to the P-Pant transferase superfamily. AcpS family. Mg(2+) serves as cofactor.

It is found in the cytoplasm. The enzyme catalyses apo-[ACP] + CoA = holo-[ACP] + adenosine 3',5'-bisphosphate + H(+). Its function is as follows. Transfers the 4'-phosphopantetheine moiety from coenzyme A to a Ser of acyl-carrier-protein. This Ehrlichia ruminantium (strain Welgevonden) protein is Holo-[acyl-carrier-protein] synthase.